The primary structure comprises 297 residues: Phosphatidylserine decarboxylase proenzyme (297 aa).

Residues aspartate 92, histidine 149, and serine 254 each act as charge relay system; for autoendoproteolytic cleavage activity in the active site. The active-site Schiff-base intermediate with substrate; via pyruvic acid; for decarboxylase activity is serine 254. Serine 254 is modified (pyruvic acid (Ser); by autocatalysis).

It belongs to the phosphatidylserine decarboxylase family. PSD-B subfamily. Prokaryotic type I sub-subfamily. Heterodimer of a large membrane-associated beta subunit and a small pyruvoyl-containing alpha subunit. Pyruvate serves as cofactor. Post-translationally, is synthesized initially as an inactive proenzyme. Formation of the active enzyme involves a self-maturation process in which the active site pyruvoyl group is generated from an internal serine residue via an autocatalytic post-translational modification. Two non-identical subunits are generated from the proenzyme in this reaction, and the pyruvate is formed at the N-terminus of the alpha chain, which is derived from the carboxyl end of the proenzyme. The autoendoproteolytic cleavage occurs by a canonical serine protease mechanism, in which the side chain hydroxyl group of the serine supplies its oxygen atom to form the C-terminus of the beta chain, while the remainder of the serine residue undergoes an oxidative deamination to produce ammonia and the pyruvoyl prosthetic group on the alpha chain. During this reaction, the Ser that is part of the protease active site of the proenzyme becomes the pyruvoyl prosthetic group, which constitutes an essential element of the active site of the mature decarboxylase.

The protein localises to the cell membrane. The catalysed reaction is a 1,2-diacyl-sn-glycero-3-phospho-L-serine + H(+) = a 1,2-diacyl-sn-glycero-3-phosphoethanolamine + CO2. Its pathway is phospholipid metabolism; phosphatidylethanolamine biosynthesis; phosphatidylethanolamine from CDP-diacylglycerol: step 2/2. Functionally, catalyzes the formation of phosphatidylethanolamine (PtdEtn) from phosphatidylserine (PtdSer). In Bordetella parapertussis (strain 12822 / ATCC BAA-587 / NCTC 13253), this protein is Phosphatidylserine decarboxylase proenzyme.